A 130-amino-acid polypeptide reads, in one-letter code: Large ribosomal subunit protein bL21 (130 aa).

Belongs to the bacterial ribosomal protein bL21 family. As to quaternary structure, part of the 50S ribosomal subunit. Contacts protein L20.

In terms of biological role, this protein binds to 23S rRNA in the presence of protein L20. The polypeptide is Large ribosomal subunit protein bL21 (Trichormus variabilis (strain ATCC 29413 / PCC 7937) (Anabaena variabilis)).